We begin with the raw amino-acid sequence, 61 residues long: UPF0434 protein Pmen_1615 (61 aa).

Belongs to the UPF0434 family.

This Ectopseudomonas mendocina (strain ymp) (Pseudomonas mendocina) protein is UPF0434 protein Pmen_1615.